A 57-amino-acid chain; its full sequence is DNA-directed RNA polymerase subunit Rpo6 (57 aa).

Belongs to the archaeal Rpo6/eukaryotic RPB6 RNA polymerase subunit family. In terms of assembly, part of the RNA polymerase complex.

Its subcellular location is the cytoplasm. It catalyses the reaction RNA(n) + a ribonucleoside 5'-triphosphate = RNA(n+1) + diphosphate. In terms of biological role, DNA-dependent RNA polymerase (RNAP) catalyzes the transcription of DNA into RNA using the four ribonucleoside triphosphates as substrates. The polypeptide is DNA-directed RNA polymerase subunit Rpo6 (Thermococcus gammatolerans (strain DSM 15229 / JCM 11827 / EJ3)).